The primary structure comprises 473 residues: M-phase inducer phosphatase 3 (473 aa).

A disordered region spans residues 1–23 (MSTELFSSTREEGSSGSGPSFRS). At Ser-2 the chain carries N-acetylserine. Residues Ser-20 and Ser-38 each carry the phosphoserine modification. A Phosphothreonine modification is found at Thr-48. A phosphoserine mark is found at Ser-57, Ser-61, and Ser-64. At Thr-67 the chain carries Phosphothreonine. At Ser-122 the chain carries Phosphoserine; by CDK1. Ser-129 carries the phosphoserine modification. Thr-130 bears the Phosphothreonine mark. The disordered stretch occupies residues 132–158 (NGLDRGHRKRDAMCSSSANKENDNGNL). Residues 145-158 (CSSSANKENDNGNL) show a composition bias toward polar residues. At Ser-168 the chain carries Phosphoserine. Residues Ser-191 and Ser-198 each carry the phosphoserine; by PLK3 modification. At Ser-214 the chain carries Phosphoserine; by CDK1. Ser-216 carries the post-translational modification Phosphoserine; by CHEK1, CHEK2, BRSK1, MAPK14 AND MARK3. Residues 321–428 (LIEKFYVIDC…FFPEYMELCE (108 aa)) form the Rhodanese domain. The interval 334–379 (YEYLGGHIQGALNLYSQEELFNFFLKKPIVPLDTQKRIIIVFHCEF) is HIV-1 Vpr binding site. Cys-377 is an active-site residue. At Ser-472 the chain carries Phosphoserine.

This sequence belongs to the MPI phosphatase family. In terms of assembly, interacts with MAPK14 and 14-3-3 proteins. When phosphorylated on Ser-129 and/or Thr-130, interacts with PLK1. Interacts with MARK3/C-TAK1. As to quaternary structure, (Microbial infection) Interacts with HIV-1 Vpr; this interaction inactivates CDC25C phosphatase activity. Post-translationally, phosphorylated by CHEK1 and MAPK14 at Ser-216. This phosphorylation creates a binding site for 14-3-3 protein and inhibits the phosphatase. Phosphorylated by PLK4. Phosphorylated by PLK1, leading to activate the phosphatase activity. Phosphorylation by PLK3 at Ser-191 promotes nuclear translocation. Ser-198 is a minor phosphorylation site. Was initially reported to be phosphorylated by PLK3 at Ser-216. However, such phosphorylation by PLK3 was not confirmed by other groups. Phosphorylation at Thr-48, Thr-67, Ser-122, Thr-130, Ser-168 and Ser-214 occurs at G2 and G2-M transition and is probably catalyzed by CDK1. Ser-168 phosphorylation levels are lower than those at the other 5 CDK1 sites. Phosphorylation by CDK1 leads to increased activity.

It localises to the nucleus. It catalyses the reaction O-phospho-L-tyrosyl-[protein] + H2O = L-tyrosyl-[protein] + phosphate. In terms of biological role, functions as a dosage-dependent inducer in mitotic control. Tyrosine protein phosphatase required for progression of the cell cycle. When phosphorylated, highly effective in activating G2 cells into prophase. Directly dephosphorylates CDK1 and activates its kinase activity. The protein is M-phase inducer phosphatase 3 (CDC25C) of Homo sapiens (Human).